Consider the following 129-residue polypeptide: Glycine cleavage system H protein (129 aa).

The region spanning 24-106 (SYTVGITEHA…FGDGWFFRVM (83 aa)) is the Lipoyl-binding domain. Lys-65 is modified (N6-lipoyllysine).

Belongs to the GcvH family. As to quaternary structure, the glycine cleavage system is composed of four proteins: P, T, L and H. The cofactor is (R)-lipoate.

Its function is as follows. The glycine cleavage system catalyzes the degradation of glycine. The H protein shuttles the methylamine group of glycine from the P protein to the T protein. In Shewanella frigidimarina (strain NCIMB 400), this protein is Glycine cleavage system H protein.